The primary structure comprises 687 residues: Adhesion G-protein coupled receptor G1 (687 aa).

The signal sequence occupies residues 1–25; sequence MAVQVLRQMVYFLLSLFSLVQGAHS. 26–33 serves as a coordination point for heparin; the sequence is GSPREDFR. Topologically, residues 26-402 are extracellular; the sequence is GSPREDFRFC…TEVEATHKHY (377 aa). 2 cysteine pairs are disulfide-bonded: C35–C91 and C121–C177. N-linked (GlcNAc...) asparagine glycans are attached at residues N39, N148, and N171. 190–200 provides a ligand contact to heparin; the sequence is LQHPQKAAKRP. The region spanning 224–395 is the GAIN-B domain; sequence DTLSFEEDRV…AVLMVSSTEV (172 aa). N-linked (GlcNAc...) asparagine glycans are attached at residues N234, N303, N324, and N341. 2 disulfides stabilise this stretch: C346-C377 and C366-C379. Residues 346–395 form a GPS region; that stretch reads CVFWVEDPASSSTGSWSSAGCETVSRDTQTSCLCNHLTYFAVLMVSSTEV. The segment at 384 to 397 is stachel; that stretch reads YFAVLMVSSTEVEA. The helical transmembrane segment at 403–423 threads the bilayer; it reads LTLLSYVGCVISALACVFTIA. Residues 424–442 are Cytoplasmic-facing; it reads AYLCSRRKSRDYTIKVHMN. Residues 443–463 form a helical membrane-spanning segment; sequence LLSAVFLLDVSFLLSEPVALT. Topologically, residues 464 to 471 are extracellular; sequence GSEAACRT. The helical transmembrane segment at 472 to 492 threads the bilayer; sequence SAMFLHFSLLACLSWMGLEGY. Residues 493 to 512 are Cytoplasmic-facing; that stretch reads NLYRLVVEVFGTYVPGYLLK. Residues 513–533 traverse the membrane as a helical segment; it reads LSIVGWGFPVFLVTLVALVDV. At 534-570 the chain is on the extracellular side; sequence NNYGPIILAVRRTPERVTYPSMCWIRDSLVSYVTNLG. The chain crosses the membrane as a helical span at residues 571–591; it reads LFSLVFLFNLAMLATMVVQIL. Residues 592–603 are Cytoplasmic-facing; the sequence is RLRPHSQNWPHV. A helical transmembrane segment spans residues 604–624; the sequence is LTLLGLSLVLGLPWALVFFSF. At 625 to 630 the chain is on the extracellular side; the sequence is ASGTFQ. Residues 631 to 651 form a helical membrane-spanning segment; sequence LVILYLFSIITSFQGFLIFLW. Residues 652 to 687 lie on the Cytoplasmic side of the membrane; it reads YWSMRFQAQGGPSPLKNNSDSAKLPISSGSTSSSRI. The disordered stretch occupies residues 664–687; sequence SPLKNNSDSAKLPISSGSTSSSRI. The segment covering 678–687 has biased composition (low complexity); sequence SSGSTSSSRI.

The protein belongs to the G-protein coupled receptor 2 family. LN-TM7 subfamily. In terms of assembly, heterodimer of 2 chains generated by proteolytic processing; the large extracellular N-terminal fragment (ADGRG1 NT) and the membrane-bound C-terminal fragment (ADGRG1-CT) predominantly remain associated and non-covalently linked. ADGRG1 NT self-associates in a trans-trans manner; the homophilic interaction enhances receptor signaling. Interacts with TGM2. Interacts with heparin; leading to the reduction of ADGRG1 shedding. Interacts with COL3A1. Part of a GPCR-tetraspanin complex at least consisting of ADGRG1, CD81, eventually CD9, and GNA11 in which CD81 is enhancing the association of ADGRG1 with GNA11. Autoproteolytically cleaved into 2 fragments; the large extracellular N-terminal fragment and the membroune-bound C-terminal fragment predominantly remain associated and non-covalently linked. In terms of processing, N-glycosylated. The secreted ADGRG1 N-terminal fragment is heavily glycosylated. Post-translationally, ubiquitinated. Undergoes polyubiquitination upon activation. As to expression, expressed in neural progenitor cells in fetal forbrain. Expressed in migrating neurons. Expressed in radial glial endfeet (at protein level). Expressed in peritubular myoid cells, Sertoli cells, and germ cells of the testis.

Its subcellular location is the cell membrane. It localises to the secreted. The protein localises to the membrane raft. With respect to regulation, forms a heterodimer of 2 chains generated by proteolytic processing that remain associated through non-covalent interactions mediated by the GAIN-B domain. In the inactivated receptor, the Stachel sequence (also named stalk) is embedded in the GAIN-B domain, where it adopts a beta-strand conformation. On activation, the Stachel moves into the 7 transmembrane region and adopts a twisted hook-shaped configuration that forms contacts within the receptor, leading to coupling of a G-alpha protein, which activates signaling. The cleaved GAIN-B and N-terminal domains can then dissociate from the rest of the receptor. Activated by the small-molecule agonist, 3-alpha-acetoxydihydrodeoxygedunin (3-alpha-DOG). In terms of biological role, adhesion G-protein coupled receptor (aGPCR) for steroid hormone 17alpha-hydroxypregnenolone (17-OH), which is involved in cell adhesion and cell-cell interactions. Ligand binding causes a conformation change that triggers signaling via guanine nucleotide-binding proteins (G proteins) and modulates the activity of downstream effectors, such as RhoA pathway. ADGRG1 is coupled to G(12) and/or G(13) G proteins (GNA12 and GNA13, respectively) and mediates the activation Rho small GTPases. Acts as a potent suppressor of ferroptosis: binding to 17-OH-binding initiates signaling that down-regulates CD36 and alleviates ferroptosis-induced liver injury. Ligand-binding also induces cell adhesion activity via association with proteins such as collagen III/COL3A1 and TGM2. Mediates cell matrix adhesion in developing neurons and hematopoietic stem cells. Involved in cortical development, specifically in maintenance of the pial basement membrane integrity and in cortical lamination: association with COL3A1 in the developing brain inhibits neuronal migration via activation of the RhoA pathway. Together with TGM2, acts as a regulator of myelination and myelin repair in oligodendrocyte precursor cells. Acts as a hemostatic sensor of shear force: G protein-coupled receptor signaling is activated in response to shear force in platelets, promoting G(13) G protein signaling, and platelet shape change and aggregation in a COL3A1-dependent manner. Acts as an inhibitor of VEGFA production thereby inhibiting angiogenesis through a signaling pathway mediated by PRKCA. Plays a role in the maintenance of hematopoietic stem cells in bone marrow niche. Plays an essential role in testis development. Functionally, adhesion G-protein coupled receptor (aGPCR) for phosphatidylserine, which is involved in microglia-mediated synapse pruning during development. Required to maintain appropriate synaptic numbers in several brain regions in a time- and circuit-dependent fashion: phosphatidylserine-binding acts as a 'eat-me' signal for apoptotic cells, leading to microglial engulfment of phosphatidylserine-positive synapses. The sequence is that of Adhesion G-protein coupled receptor G1 from Mus musculus (Mouse).